The primary structure comprises 222 residues: Glutathione transferase GST 23 (222 aa).

Residues 4–83 (KGVKVLGMWA…YIDEVWKGGY (80 aa)) enclose the GST N-terminal domain. Glutathione is bound by residues Ser-14, Lys-41, Val-55, and 67–68 (ES). In terms of domain architecture, GST C-terminal spans 89 to 220 (DPYERAQARF…ANKARREQLL (132 aa)).

Belongs to the GST superfamily.

The enzyme catalyses RX + glutathione = an S-substituted glutathione + a halide anion + H(+). Its function is as follows. Involved in multiple disease resistance (MDR). In Zea mays (Maize), this protein is Glutathione transferase GST 23.